A 199-amino-acid chain; its full sequence is Recombination protein RecR (199 aa).

The C4-type zinc finger occupies 58–73 (CSVCGNLTDTDVCPLC). Residues 81 to 176 (SVICVVEDPR…KTTRIAHGIP (96 aa)) form the Toprim domain.

The protein belongs to the RecR family.

In terms of biological role, may play a role in DNA repair. It seems to be involved in an RecBC-independent recombinational process of DNA repair. It may act with RecF and RecO. This is Recombination protein RecR from Acetivibrio thermocellus (strain ATCC 27405 / DSM 1237 / JCM 9322 / NBRC 103400 / NCIMB 10682 / NRRL B-4536 / VPI 7372) (Clostridium thermocellum).